We begin with the raw amino-acid sequence, 254 residues long: Pimeloyl-[acyl-carrier protein] methyl ester esterase (254 aa).

Positions 14–242 (LVLLHGWGMN…ASHAPFISHP (229 aa)) constitute an AB hydrolase-1 domain. Substrate-binding positions include Trp-20, 82 to 83 (SL), and 143 to 147 (FLAIQ). Ser-82 acts as the Nucleophile in catalysis. Active-site residues include Asp-207 and His-235. Substrate is bound at residue His-235.

It belongs to the AB hydrolase superfamily. Carboxylesterase BioH family. In terms of assembly, monomer.

It localises to the cytoplasm. It catalyses the reaction 6-carboxyhexanoyl-[ACP] methyl ester + H2O = 6-carboxyhexanoyl-[ACP] + methanol + H(+). The protein operates within cofactor biosynthesis; biotin biosynthesis. In terms of biological role, the physiological role of BioH is to remove the methyl group introduced by BioC when the pimeloyl moiety is complete. It allows to synthesize pimeloyl-ACP via the fatty acid synthetic pathway through the hydrolysis of the ester bonds of pimeloyl-ACP esters. The polypeptide is Pimeloyl-[acyl-carrier protein] methyl ester esterase (Aeromonas hydrophila subsp. hydrophila (strain ATCC 7966 / DSM 30187 / BCRC 13018 / CCUG 14551 / JCM 1027 / KCTC 2358 / NCIMB 9240 / NCTC 8049)).